Consider the following 36-residue polypeptide: QKKCPGRCTLKCGKHERPTLPYNCGKYICCVPVKVK.

Position 1 is a pyrrolidone carboxylic acid (Q1). 3 disulfide bridges follow: C4-C30, C8-C29, and C12-C24.

This sequence belongs to the beta-defensin family. In terms of assembly, monomer. As to expression, detected in egg white (at protein level).

Its subcellular location is the secreted. Functionally, antibacterial and antiviral peptide. Has strong inhibitory activity towards E.coli and S.typhimurium. Has significant antiviral activity against Chandipura virus. This is Defensin-like turtle egg white protein TEWP from Caretta caretta (Loggerhead sea turtle).